Reading from the N-terminus, the 159-residue chain is Phosphopantetheine adenylyltransferase (159 aa).

Thr-10 provides a ligand contact to substrate. ATP-binding positions include 10 to 11 and His-18; that span reads TF. Substrate is bound by residues Lys-42, Leu-74, and Arg-88. ATP-binding positions include 89–91, Glu-99, and 124–130; these read GLR and YAFISSS.

This sequence belongs to the bacterial CoaD family. Homohexamer. Mg(2+) serves as cofactor.

It is found in the cytoplasm. It carries out the reaction (R)-4'-phosphopantetheine + ATP + H(+) = 3'-dephospho-CoA + diphosphate. The protein operates within cofactor biosynthesis; coenzyme A biosynthesis; CoA from (R)-pantothenate: step 4/5. Its function is as follows. Reversibly transfers an adenylyl group from ATP to 4'-phosphopantetheine, yielding dephospho-CoA (dPCoA) and pyrophosphate. This Hydrogenovibrio crunogenus (strain DSM 25203 / XCL-2) (Thiomicrospira crunogena) protein is Phosphopantetheine adenylyltransferase.